Here is a 147-residue protein sequence, read N- to C-terminus: Globin, major monomeric component (147 aa).

Residues 1 to 146 form the Globin domain; the sequence is GLSAAQRQVI…ISGALISGLQ (146 aa). Heme b is bound at residue His90.

Belongs to the globin family. As to quaternary structure, monomer.

The polypeptide is Globin, major monomeric component (Glycera dibranchiata (Bloodworm)).